Consider the following 810-residue polypeptide: Phospholipase D alpha 1 (810 aa).

The region spanning 1 to 126 (MAQHLLHGTL…INGEEVDQWV (126 aa)) is the C2 domain. Aspartate 187 serves as a coordination point for Ca(2+). The PLD phosphodiesterase 1 domain occupies 327–366 (TMFTHHQKIVVVDSEMPSRGGSEMRRIVSFVGGIDLCDGR). Residues histidine 332, lysine 334, and aspartate 339 contribute to the active site. Histidine 332 contacts a 1,2-diacyl-sn-glycero-3-phosphate. Histidine 372 and histidine 406 together coordinate Ca(2+). Glutamine 522 and histidine 661 together coordinate a 1,2-diacyl-sn-glycero-3-phosphate. Residues 656-683 (FMIYVHTKMMIVDDEYIIIGSANINQRS) form the PLD phosphodiesterase 2 domain. Active-site residues include histidine 661, lysine 663, and aspartate 668. Glutamate 722 contacts Ca(2+).

It belongs to the phospholipase D family. C2-PLD subfamily. In terms of assembly, interacts with GPA1. This binding inhibits PLDALPHA1 activity and is relieved by GTP. Ca(2+) is required as a cofactor. Highly expressed in roots, stems and flowers, moderately in leaves, seedlings and siliques. Not detected in seeds.

It is found in the cytoplasm. The protein resides in the cell membrane. Its subcellular location is the mitochondrion membrane. It localises to the microsome membrane. The protein localises to the vacuole. It is found in the cytoplasmic vesicle. The protein resides in the clathrin-coated vesicle. The enzyme catalyses a 1,2-diacyl-sn-glycero-3-phosphocholine + H2O = a 1,2-diacyl-sn-glycero-3-phosphate + choline + H(+). With respect to regulation, not inhibited by neomycin. Its function is as follows. Hydrolyzes glycerol-phospholipids at the terminal phosphodiesteric bond to generate phosphatidic acids (PA). Plays an important role in various cellular processes, including phytohormone action and response to stress, characterized by acidification of the cell. Involved in wound induction of jasmonic acid. May be involved in membrane lipid remodeling. Probably involved in freezing tolerance by modulating the cold-responsive genes and accumulation of osmolytes. Can use phosphatidylcholine (PC), phosphatidylethanolamine (PE) and phosphatidylglycerol (PG) as substrates, both in presence or in absence of PIP2. Its main substrate is phosphatidylcholine. Stimulates the intrinsic GTPase activity of GPA1 upon binding. Mediates the abscisic acid effects on stomata through interaction with GPA1 and the production of phosphatidic acid that bind to ABI1. Involved in seed aging and deterioration. Involved in microtubule stabilization and salt tolerance. Involved in abscisic acid-induced stomatal closure. The chain is Phospholipase D alpha 1 from Arabidopsis thaliana (Mouse-ear cress).